Consider the following 201-residue polypeptide: DeSI-like protein sdu1 (201 aa).

The 143-residue stretch at 1-143 (MKVYINVYDL…AFPTITNALL (143 aa)) folds into the PPPDE domain. Active-site residues include histidine 29 and cysteine 105. Residues 146-201 (GQKNTSDVDDSSDSSSDVDEETLIVSKSKKAHKDIPKFSAPPPSADLNNLITDSLP) form a disordered region. Acidic residues predominate over residues 152–167 (DVDDSSDSSSDVDEET). Polar residues predominate over residues 191-201 (DLNNLITDSLP).

Belongs to the DeSI family.

The protein resides in the cytoplasm. Has a role in meiosis. This chain is DeSI-like protein sdu1 (sdu1), found in Schizosaccharomyces pombe (strain 972 / ATCC 24843) (Fission yeast).